The following is a 482-amino-acid chain: Glutamate--tRNA ligase (482 aa).

The 'HIGH' region signature appears at 9–19; that stretch reads PSPTGPLHIGG. Positions 250-254 match the 'KMSKS' region motif; sequence KMSKR. Lysine 253 contacts ATP.

It belongs to the class-I aminoacyl-tRNA synthetase family. Glutamate--tRNA ligase type 1 subfamily. As to quaternary structure, monomer.

It is found in the cytoplasm. It carries out the reaction tRNA(Glu) + L-glutamate + ATP = L-glutamyl-tRNA(Glu) + AMP + diphosphate. In terms of biological role, catalyzes the attachment of glutamate to tRNA(Glu) in a two-step reaction: glutamate is first activated by ATP to form Glu-AMP and then transferred to the acceptor end of tRNA(Glu). The polypeptide is Glutamate--tRNA ligase (Desulforamulus reducens (strain ATCC BAA-1160 / DSM 100696 / MI-1) (Desulfotomaculum reducens)).